A 222-amino-acid chain; its full sequence is N-(5'-phosphoribosyl)anthranilate isomerase (222 aa).

Belongs to the TrpF family.

The enzyme catalyses N-(5-phospho-beta-D-ribosyl)anthranilate = 1-(2-carboxyphenylamino)-1-deoxy-D-ribulose 5-phosphate. Its pathway is amino-acid biosynthesis; L-tryptophan biosynthesis; L-tryptophan from chorismate: step 3/5. The protein is N-(5'-phosphoribosyl)anthranilate isomerase of Rhizobium rhizogenes (strain K84 / ATCC BAA-868) (Agrobacterium radiobacter).